We begin with the raw amino-acid sequence, 1484 residues long: DNA-directed RNA polymerase subunit beta' (1484 aa).

The Zn(2+) site is built by Cys67, Cys69, Cys82, and Cys85. The Mg(2+) site is built by Asp499, Asp501, and Asp503. Positions 867, 943, 950, and 953 each coordinate Zn(2+).

It belongs to the RNA polymerase beta' chain family. As to quaternary structure, the RNAP catalytic core consists of 2 alpha, 1 beta, 1 beta' and 1 omega subunit. When a sigma factor is associated with the core the holoenzyme is formed, which can initiate transcription. Mg(2+) serves as cofactor. The cofactor is Zn(2+).

It catalyses the reaction RNA(n) + a ribonucleoside 5'-triphosphate = RNA(n+1) + diphosphate. DNA-dependent RNA polymerase catalyzes the transcription of DNA into RNA using the four ribonucleoside triphosphates as substrates. This is DNA-directed RNA polymerase subunit beta' from Chlorobium phaeovibrioides (strain DSM 265 / 1930) (Prosthecochloris vibrioformis (strain DSM 265)).